Here is a 782-residue protein sequence, read N- to C-terminus: Ribosome biogenesis protein ERB1 (782 aa).

Positions 1–11 are enriched in basic residues; the sequence is MSVNSRKRKVA. Residues 1-120 are disordered; sequence MSVNSRKRKV…LEGEEDESLK (120 aa). Composition is skewed to acidic residues over residues 39–51 and 59–75; these read DESE…EDTD and LSDE…DEAE. Positions 82–92 are enriched in polar residues; that stretch reads RNLNTSGGSQQ. Acidic residues predominate over residues 106-117; it reads GADGELEGEEDE. WD repeat units lie at residues 432–471 and 475–516; these read GQEG…QVWN and SDEE…PDVE. Positions 533–556 are disordered; the sequence is KPSTAANGEAPKQSPGKWSRPGSR. 4 WD repeats span residues 612 to 652, 653 to 692, 696 to 736, and 752 to 782; these read RLKG…KILQ, PGAK…KPYK, FHKE…DLME, and KSRL…RLWN.

The protein belongs to the WD repeat BOP1/ERB1 family. As to quaternary structure, component of the NOP7 complex, composed of ERB1, NOP7 and YTM1. The complex is held together by ERB1, which interacts with NOP7 via its N-terminal domain and with YTM1 via a high-affinity interaction between the seven-bladed beta-propeller domains of the 2 proteins. The NOP7 complex associates with the 66S pre-ribosome.

It is found in the nucleus. The protein localises to the nucleolus. It localises to the nucleoplasm. Functionally, component of the NOP7 complex, which is required for maturation of the 25S and 5.8S ribosomal RNAs and formation of the 60S ribosome. The chain is Ribosome biogenesis protein ERB1 from Phaeosphaeria nodorum (strain SN15 / ATCC MYA-4574 / FGSC 10173) (Glume blotch fungus).